The following is a 306-amino-acid chain: UDP-3-O-acyl-N-acetylglucosamine deacetylase (306 aa).

Zn(2+) contacts are provided by histidine 79, histidine 238, and aspartate 242. Histidine 265 acts as the Proton donor in catalysis.

Belongs to the LpxC family. Zn(2+) serves as cofactor.

The enzyme catalyses a UDP-3-O-[(3R)-3-hydroxyacyl]-N-acetyl-alpha-D-glucosamine + H2O = a UDP-3-O-[(3R)-3-hydroxyacyl]-alpha-D-glucosamine + acetate. Its pathway is glycolipid biosynthesis; lipid IV(A) biosynthesis; lipid IV(A) from (3R)-3-hydroxytetradecanoyl-[acyl-carrier-protein] and UDP-N-acetyl-alpha-D-glucosamine: step 2/6. In terms of biological role, catalyzes the hydrolysis of UDP-3-O-myristoyl-N-acetylglucosamine to form UDP-3-O-myristoylglucosamine and acetate, the committed step in lipid A biosynthesis. The protein is UDP-3-O-acyl-N-acetylglucosamine deacetylase of Shewanella baltica (strain OS223).